We begin with the raw amino-acid sequence, 1367 residues long: Dynactin, 150 kDa isoform (1367 aa).

Positions 28–70 (GETAFAPGTWVGIELDEPSGKNDGSVQGERYFNCEMGYGMFVR) constitute a CAP-Gly domain. The interval 76-318 (VIAQPPPPPP…NLKATTITPR (243 aa)) is disordered. Composition is skewed to low complexity over residues 88–99 (TFRRSVTTRPTS) and 132–149 (PSRT…RSPT). Residues 150-163 (KQLATASSSGNPSR) show a composition bias toward polar residues. Low complexity-rich tracts occupy residues 164-190 (SGTP…SRHS) and 243-259 (STGS…KRGS). Coiled coils occupy residues 321–598 (ITNT…MQEE), 637–698 (LQSD…EAEQ), and 1039–1199 (AELK…RARL).

It belongs to the dynactin 150 kDa subunit family. As to quaternary structure, large macromolecular complex of at least 10 components; p150(glued) binds directly to microtubules and to cytoplasmic dynein.

The protein localises to the cytoplasm. The protein resides in the cytoskeleton. Its function is as follows. Required for the cytoplasmic dynein-driven retrograde movement of vesicles and organelles along microtubules. Dynein-dynactin interaction is a key component of the mechanism of axonal transport of vesicles and organelles. The sequence is that of Dynactin, 150 kDa isoform (ro-3) from Neurospora crassa (strain ATCC 24698 / 74-OR23-1A / CBS 708.71 / DSM 1257 / FGSC 987).